Consider the following 206-residue polypeptide: Large ribosomal subunit protein mL40 (206 aa).

The N-terminal 46 residues, 1 to 46, are a transit peptide targeting the mitochondrion; the sequence is MTASVLRSISLALRPTSGLLGTWQTQLRETHQRASLLSFWELIPMR. Positions 168–192 are disordered; the sequence is LFPFEKEGPHYTPPIPNYQPPEGRY.

Belongs to the mitochondrion-specific ribosomal protein mL40 family. As to quaternary structure, component of the mitochondrial large ribosomal subunit (mt-LSU). Mature mammalian 55S mitochondrial ribosomes consist of a small (28S) and a large (39S) subunit. The 28S small subunit contains a 12S ribosomal RNA (12S mt-rRNA) and 30 different proteins. The 39S large subunit contains a 16S rRNA (16S mt-rRNA), a copy of mitochondrial valine transfer RNA (mt-tRNA(Val)), which plays an integral structural role, and 52 different proteins. mL40 binds to the major groove of the anticodon stem of mt-tRNA(Val) in the central protuberance. In terms of tissue distribution, ubiquitous.

It localises to the mitochondrion. In Homo sapiens (Human), this protein is Large ribosomal subunit protein mL40 (MRPL40).